The sequence spans 304 residues: Putative HTH-type transcriptional regulatory protein Memar_2347 (304 aa).

One can recognise an HTH cro/C1-type domain in the interval 132–189; the sequence is LREVRERFRMSLGDLASHLGVSRRTISKYESGMGTTLDVAIKLEEIFNAPLVETIELL. The H-T-H motif DNA-binding region spans 143–162; the sequence is LGDLASHLGVSRRTISKYES.

The sequence is that of Putative HTH-type transcriptional regulatory protein Memar_2347 from Methanoculleus marisnigri (strain ATCC 35101 / DSM 1498 / JR1).